The chain runs to 258 residues: Imidazole glycerol phosphate synthase subunit HisF (258 aa).

Active-site residues include aspartate 11 and aspartate 130.

It belongs to the HisA/HisF family. Heterodimer of HisH and HisF.

It is found in the cytoplasm. The enzyme catalyses 5-[(5-phospho-1-deoxy-D-ribulos-1-ylimino)methylamino]-1-(5-phospho-beta-D-ribosyl)imidazole-4-carboxamide + L-glutamine = D-erythro-1-(imidazol-4-yl)glycerol 3-phosphate + 5-amino-1-(5-phospho-beta-D-ribosyl)imidazole-4-carboxamide + L-glutamate + H(+). The protein operates within amino-acid biosynthesis; L-histidine biosynthesis; L-histidine from 5-phospho-alpha-D-ribose 1-diphosphate: step 5/9. Its function is as follows. IGPS catalyzes the conversion of PRFAR and glutamine to IGP, AICAR and glutamate. The HisF subunit catalyzes the cyclization activity that produces IGP and AICAR from PRFAR using the ammonia provided by the HisH subunit. In Buchnera aphidicola subsp. Baizongia pistaciae (strain Bp), this protein is Imidazole glycerol phosphate synthase subunit HisF.